The sequence spans 88 residues: Small ribosomal subunit protein bS20 (88 aa).

A disordered region spans residues 1–27 (MANSKSAKKRALQSEKRRQHNASRRSM).

Belongs to the bacterial ribosomal protein bS20 family.

Binds directly to 16S ribosomal RNA. This is Small ribosomal subunit protein bS20 from Shewanella loihica (strain ATCC BAA-1088 / PV-4).